Consider the following 468-residue polypeptide: Glutamate--tRNA ligase (468 aa).

5–7 (RIA) contacts L-glutamate. Positions 8–18 (PSPTGDPHVGT) match the 'HIGH' region motif. Histidine 15 contributes to the ATP binding site. L-glutamate-binding positions include glutamate 41, 187-191 (YHLAN), and arginine 205. Residues glutamate 208, leucine 236, 243–247 (KISKR), and lysine 246 each bind ATP. A 'KMSKS' region motif is present at residues 243 to 247 (KISKR). Residues 432–447 (QPLRAALTGSLETPGL) are interaction with tRNA.

This sequence belongs to the class-I aminoacyl-tRNA synthetase family. Glutamate--tRNA ligase type 1 subfamily. As to quaternary structure, monomer.

Its subcellular location is the cytoplasm. The enzyme catalyses tRNA(Glu) + L-glutamate + ATP = L-glutamyl-tRNA(Glu) + AMP + diphosphate. With respect to regulation, in the absence of bound tRNA, ATP is bound in a non-productive mode, and the enzyme cannot activate amino acids. Its function is as follows. Catalyzes the attachment of glutamate to tRNA(Glu) in a two-step reaction: glutamate is first activated by ATP to form Glu-AMP and then transferred to the acceptor end of tRNA(Glu). The sequence is that of Glutamate--tRNA ligase from Thermus thermophilus (strain ATCC 27634 / DSM 579 / HB8).